Reading from the N-terminus, the 321-residue chain is tRNA 2-thiolation protein NcsA (321 aa).

Residue Lys-204 forms a Glycyl lysine isopeptide (Lys-Gly) (interchain with G-Cter in SAMP2) linkage.

The protein belongs to the TtcA family. CTU1/NCS6/ATPBD3 subfamily. As to quaternary structure, interacts with monomeric and polymeric forms of SAMP2. Interacts with UbaA. Interacts with archaeal EF-1-alpha and Pan1. Non-sampylated protein forms a complex with archaeal CPSF1 of approximately 100 kDa. Sampylated at Lys-204 with the archaeal ubiquitin-like protein SAMP2. Polymeric chains of SAMP2 are also linked.

The protein operates within tRNA modification; 5-methoxycarbonylmethyl-2-thiouridine-tRNA biosynthesis. In terms of biological role, required for thiolation of mcm(5)S(2)U at the wobble uridine position of tRNA specific for lysine (tRNA(Lys)). Probably acts by catalyzing adenylation of tRNA, an intermediate required for 2-thiolation. May also act as a sulfurtransferase that transfers sulfur from thiocarboxylated SAMP2 onto the uridine of tRNA at wobble position. Required for cell growth at elevated temperatures. The sequence is that of tRNA 2-thiolation protein NcsA from Haloferax volcanii (strain ATCC 29605 / DSM 3757 / JCM 8879 / NBRC 14742 / NCIMB 2012 / VKM B-1768 / DS2) (Halobacterium volcanii).